The sequence spans 208 residues: dTTP/UTP pyrophosphatase (208 aa).

Catalysis depends on aspartate 78, which acts as the Proton acceptor.

It belongs to the Maf family. YhdE subfamily. It depends on a divalent metal cation as a cofactor.

It localises to the cytoplasm. It carries out the reaction dTTP + H2O = dTMP + diphosphate + H(+). The catalysed reaction is UTP + H2O = UMP + diphosphate + H(+). Nucleoside triphosphate pyrophosphatase that hydrolyzes dTTP and UTP. May have a dual role in cell division arrest and in preventing the incorporation of modified nucleotides into cellular nucleic acids. The chain is dTTP/UTP pyrophosphatase from Maricaulis maris (strain MCS10) (Caulobacter maris).